We begin with the raw amino-acid sequence, 226 residues long: Endonuclease NucS (226 aa).

The protein belongs to the NucS endonuclease family.

The protein resides in the cytoplasm. Its function is as follows. Cleaves both 3' and 5' ssDNA extremities of branched DNA structures. The protein is Endonuclease NucS of Mycobacterium ulcerans (strain Agy99).